Reading from the N-terminus, the 138-residue chain is MRRFRPLTWLAIGFVKGWRALISPLYGDVCKYQPSCSTYGLRALQVHGVFRATPMIIWRILRCNPWSHGGYDPVPGTPEARQWRELHPETARSKNEPIHDLTDDNPRDHEPALRKSIPGYTDPGSTHTGTPSHTRGEN.

Residues 71–138 (YDPVPGTPEA…GTPSHTRGEN (68 aa)) form a disordered region. Over residues 81-113 (RQWRELHPETARSKNEPIHDLTDDNPRDHEPAL) the composition is skewed to basic and acidic residues. Residues 123-138 (PGSTHTGTPSHTRGEN) are compositionally biased toward polar residues.

Belongs to the UPF0161 family.

The protein localises to the cell membrane. Functionally, could be involved in insertion of integral membrane proteins into the membrane. In Cutibacterium acnes (strain DSM 16379 / KPA171202) (Propionibacterium acnes), this protein is Putative membrane protein insertion efficiency factor.